The following is a 380-amino-acid chain: O-methyltransferase ucdC (380 aa).

S-adenosyl-L-methionine contacts are provided by residues 222–223, Asp247, and Arg283; that span reads GG. Catalysis depends on His287, which acts as the Proton acceptor.

The protein belongs to the class I-like SAM-binding methyltransferase superfamily. Cation-independent O-methyltransferase family. COMT subfamily.

Its pathway is secondary metabolite biosynthesis. Its function is as follows. Nonribosomal peptide synthetase that mediates the biosynthesis of usterphenyllins and uscandidusins, p-terphenyl derivatives. Within the pathway, ucdC catalyzes O-methylation of the terphenyl triol intermediate produced by ucdB to yield terphenyllin carrying two methoxy moieties at C-9 and C-12. The pathway begin with the biosynthesis of 4-hydroxyphenylpyruvate (HPPA) from L-tyrosine, possibly by the aminotransferase ucdG. The nonribosomal peptide synthetase ucdA then condenses two HPPA units to produce atromentin. The key step in this pathway is the reduction and dehydration of atromentin to form a terphenyl triol intermediate, performed by the NAD-dependent dehydrogenase ucdB. Further O-methylation by the methyltransferase ucdC forms terphenyllin carrying two methoxy moieties at C-9 and C-12, and subsequent dihydroxylation at C-3 of ring A and C-15 of ring C by the flavin-dependent oxygenase ucdD leads to 3,15-dihydroxyterphenyllin. Prenylation by ucdE at position C-5 of ring A forms usterphenyllin B, and is followed by a second prenylation at position C-14 of ring C to form usterphenyllin A. The following furan ring formation that leads to uscandidusins A and B was proven to be an unexpected spontaneous non-enzymatic reaction. This is O-methyltransferase ucdC from Aspergillus ustus.